We begin with the raw amino-acid sequence, 105 residues long: Met repressor (105 aa).

The protein belongs to the MetJ family. Homodimer.

The protein localises to the cytoplasm. Its function is as follows. This regulatory protein, when combined with SAM (S-adenosylmethionine) represses the expression of the methionine regulon and of enzymes involved in SAM synthesis. This Serratia proteamaculans (strain 568) protein is Met repressor.